Consider the following 454-residue polypeptide: MHWGMEMNVEQAIEYVKKNNVKFIRFQFVDILGFPKNVAYPVKAGEKGIEELREIFENGVWFDGSSITGFVGIEESDMLLKPDLSTLSVLPWRPEEKSVARVICDVYKDEKTPFEGDPRSRLKAILEELKKEMNGEYFVGPEPEFFLLKRDPHNPHRWVPADDGGYFDVEPLDDAPDIRRDIVLALENLGFHVEASHHEVAPGQHEVDFKFDNALKTADSVITFKMTIKNIAKKHGLKATFMPKPFFGMNGNGMHCHQSVWFNGEPSFYDPEGPYNGLSETCLSYIAGILSHAKALVAITNPTVNSYKRLVPGYEAPVNIAWANKNRSAIIRVPAARGKATRIEFRAPDPTCNPYLAFACMLAAGLDGIKKKMTAPEPVERNIFKMSEEEKKQLGIESVPANLAAALDELECDEVLQKALGKHIYENYMEIKRAEWDDFRTAVTDWETGKYLIY.

The region spanning 19 to 111 (NNVKFIRFQF…VICDVYKDEK (93 aa)) is the GS beta-grasp domain. The 337-residue stretch at 118-454 (PRSRLKAILE…DWETGKYLIY (337 aa)) folds into the GS catalytic domain. Residues Glu-142 and Glu-144 each coordinate Mg(2+). Glu-194 is a binding site for ATP. Glu-199 and Glu-206 together coordinate Mg(2+). L-glutamate-binding positions include 250 to 251 (NG) and Gly-251. His-255 provides a ligand contact to Mg(2+). ATP is bound by residues 257–259 (HQS) and Ser-259. Residues Arg-309, Glu-315, and Arg-327 each coordinate L-glutamate. ATP is bound by residues Arg-327, Arg-332, and Lys-339. Glu-344 contacts Mg(2+). Arg-346 lines the L-glutamate pocket.

Belongs to the glutamine synthetase family. As to quaternary structure, oligomer of 12 subunits arranged in the form of two hexagons. Mg(2+) serves as cofactor.

The protein localises to the cytoplasm. The enzyme catalyses L-glutamate + NH4(+) + ATP = L-glutamine + ADP + phosphate + H(+). With respect to regulation, feedback inhibited by glycine and alanine, and inhibited by low concentrations of methionine sulfoximine. Functionally, probably involved in nitrogen metabolism via ammonium assimilation. Catalyzes the ATP-dependent biosynthesis of glutamine from glutamate and ammonia. Beta-glutamate is a much poorer substrate than alpha-glutamate. The protein is Glutamine synthetase of Methanocaldococcus jannaschii (strain ATCC 43067 / DSM 2661 / JAL-1 / JCM 10045 / NBRC 100440) (Methanococcus jannaschii).